The chain runs to 487 residues: Aspyridones efflux protein apdF (487 aa).

Basic and acidic residues predominate over residues 1-21 (MSSVRESSKDESIVHPPKAPE). Residues 1-25 (MSSVRESSKDESIVHPPKAPESEPF) are disordered. The chain crosses the membrane as a helical span at residues 35–55 (VALGAGGVLFCTFGYVNAFGV). The N-linked (GlcNAc...) asparagine glycan is linked to Asn67. The next 8 helical transmembrane spans lie at 75–95 (WIGS…GPLF), 99–119 (GAKV…MTSL), 126–146 (FFLA…APAL), 159–179 (AAMG…PIAL), 191–211 (WAVR…VLGI), 234–254 (VATL…FFYL), 262–282 (GMST…SFFG), and 293–313 (IGPY…TFCW). Asn319 is a glycosylation site (N-linked (GlcNAc...) asparagine). The next 3 membrane-spanning stretches (helical) occupy residues 322–342 (IIVF…ITPA), 354–374 (IGTY…IGPP), and 385–405 (GFLQ…VLAF).

The protein belongs to the major facilitator superfamily. Monocarboxylate porter (TC 2.A.1.13) family.

It is found in the cell membrane. In terms of biological role, efflux pump that may be involved in the secretion of aspyridones. The protein is Aspyridones efflux protein apdF of Emericella nidulans (strain FGSC A4 / ATCC 38163 / CBS 112.46 / NRRL 194 / M139) (Aspergillus nidulans).